The chain runs to 263 residues: Triosephosphate isomerase (263 aa).

10 to 12 (NWK) contributes to the substrate binding site. H104 (electrophile) is an active-site residue. E176 serves as the catalytic Proton acceptor. Substrate is bound by residues G182, S221, and 242-243 (GG).

The protein belongs to the triosephosphate isomerase family. As to quaternary structure, homodimer.

The protein resides in the cytoplasm. The catalysed reaction is D-glyceraldehyde 3-phosphate = dihydroxyacetone phosphate. The protein operates within carbohydrate biosynthesis; gluconeogenesis. It functions in the pathway carbohydrate degradation; glycolysis; D-glyceraldehyde 3-phosphate from glycerone phosphate: step 1/1. In terms of biological role, involved in the gluconeogenesis. Catalyzes stereospecifically the conversion of dihydroxyacetone phosphate (DHAP) to D-glyceraldehyde-3-phosphate (G3P). The protein is Triosephosphate isomerase of Haemophilus influenzae (strain ATCC 51907 / DSM 11121 / KW20 / Rd).